Reading from the N-terminus, the 198-residue chain is Probable nicotinate-nucleotide adenylyltransferase (198 aa).

Belongs to the NadD family.

It catalyses the reaction nicotinate beta-D-ribonucleotide + ATP + H(+) = deamido-NAD(+) + diphosphate. Its pathway is cofactor biosynthesis; NAD(+) biosynthesis; deamido-NAD(+) from nicotinate D-ribonucleotide: step 1/1. In terms of biological role, catalyzes the reversible adenylation of nicotinate mononucleotide (NaMN) to nicotinic acid adenine dinucleotide (NaAD). The protein is Probable nicotinate-nucleotide adenylyltransferase of Albidiferax ferrireducens (strain ATCC BAA-621 / DSM 15236 / T118) (Rhodoferax ferrireducens).